A 102-amino-acid chain; its full sequence is Small ribosomal subunit protein uS10 (102 aa).

It belongs to the universal ribosomal protein uS10 family. In terms of assembly, part of the 30S ribosomal subunit.

In terms of biological role, involved in the binding of tRNA to the ribosomes. The polypeptide is Small ribosomal subunit protein uS10 (Streptococcus sanguinis (strain SK36)).